Here is a 676-residue protein sequence, read N- to C-terminus: GRB2-associated-binding protein 2 (676 aa).

Serine 2 is subject to Phosphoserine. The PH domain maps to 6–117; it reads DVVCTGWLRK…WVQSICQICG (112 aa). Residues 127-178 form a disordered region; it reads SLRNVSSAGHGPRSSPAELSSSSQHLLRERKSSAPSHSSQPTLFTFEPPVSN. 11 positions are modified to phosphoserine: serine 133, serine 140, serine 141, serine 148, serine 149, serine 159, serine 164, serine 210, serine 218, serine 223, and serine 264. Residues 140–149 show a composition bias toward low complexity; it reads SSPAELSSSS. The segment covering 159 to 169 has biased composition (polar residues); the sequence is SAPSHSSQPTL. A Phosphothreonine modification is found at threonine 265. Tyrosine 266 is modified (phosphotyrosine). At threonine 278 the chain carries Phosphothreonine. Residues serine 281 and serine 285 each carry the phosphoserine modification. Phosphothreonine is present on threonine 287. Tyrosine 293 is modified (phosphotyrosine). Residue threonine 331 is modified to Phosphothreonine. A disordered region spans residues 341–430; sequence VATPGDSAIA…RSAESMSDGV (90 aa). An SH3-binding motif is present at residues 351 to 358; it reads PPPRPPKP. Serine 368 carries the post-translational modification Phosphoserine. Phosphothreonine is present on residues threonine 385 and threonine 391. Serine 405 carries the post-translational modification Phosphoserine. Residue threonine 408 is modified to Phosphothreonine. Phosphoserine occurs at positions 422 and 425. The residue at position 452 (tyrosine 452) is a Phosphotyrosine. Serine 480 bears the Phosphoserine mark. Residues 492-531 form a disordered region; it reads PSTTLPVHRGPSRGSEIQPPPVNRNLKPDRKAKPTPLDLR. The SH3-binding signature appears at 510 to 519; that stretch reads PPPVNRNLKP. The residue at position 543 (serine 543) is a Phosphoserine. 2 stretches are compositionally biased toward polar residues: residues 556–577 and 589–611; these read FNSS…STDS and NPVS…STGS. Disordered regions lie at residues 556 to 643 and 656 to 676; these read FNSS…KVDY and NTMQ…GAKL. Residues serine 622 and serine 623 each carry the phosphoserine modification. The residue at position 643 (tyrosine 643) is a Phosphotyrosine. Positions 656–670 are enriched in polar residues; it reads NTMQEWTDVRQSSEP.

It belongs to the GAB family. In terms of assembly, part of a complex composed of EEIG1, TNFRSF11A/RANK, PLCG2, GAB2, TEC and BTK; complex formation increases in the presence of TNFSF11/RANKL. Interacts with SHC1; may mediate interaction with receptors. Interacts with SYK. Interacts with PI-3 kinase. Interacts with GRB2 (via SH3 2 domain). Interacts (phosphorylated) with PTPN11. Interacts with TNFRSF11A (via cytoplasmic domain). Interacts (phosphorylated) with 14-3-3 family proteins SFN, YWHAB, YWHAE, YWHAG, YWHAH, YWHAQ and YWHAZ; prevents interaction with GRB2 and attenuates GAB2 signaling. Interacts with HCK. Post-translationally, phosphorylated on tyrosine residue(s) by the thrombopoietin receptor (TPOR), stem cell factor receptor (SCFR), and T-cell and B-cell antigen receptors, gp130, IL-2R and IL-3R. Phosphorylated upon stimulation of TNFRSF11A/RANK by TNFSF11/RANKL. Phosphorylated upon EGF stimulation. Phosphorylated on tyrosine residues by HCK upon IL6 signaling. In terms of processing, dephosphorylated by PTPN11.

The protein localises to the cytoplasm. It is found in the cell membrane. The protein resides in the membrane raft. Functionally, adapter protein which acts downstream of several membrane receptors including cytokine, antigen, hormone, cell matrix and growth factor receptors to regulate multiple signaling pathways. Regulates osteoclast differentiation mediating the TNFRSF11A/RANK signaling. In allergic response, it plays a role in mast cells activation and degranulation through PI-3-kinase regulation. Also involved in the regulation of cell proliferation and hematopoiesis. The sequence is that of GRB2-associated-binding protein 2 (GAB2) from Homo sapiens (Human).